Reading from the N-terminus, the 198-residue chain is MVKCKLFFWLISWFLKVKNVEKVWKFLKSCPENCYSDPQFAFIGRSNVGKSTLINALANKKIAKTSTKPGRTQLLNFYKNESEKLFVDLPGYGYAAVSKTKKHQIDRIIAGYFQKDQPISAVFLILDARVGFTNLDYIMIEYIIQQGFKLHILANKIDKTNQSTRAILLNQCKKLKLNCLLISAKNKNNLSKLQELLE.

The region spanning 36-198 (SDPQFAFIGR…NLSKLQELLE (163 aa)) is the EngB-type G domain. GTP contacts are provided by residues 44–51 (GRSNVGKS), 70–74 (GRTQL), 88–91 (DLPG), 155–158 (NKID), and 182–184 (ISA). Mg(2+)-binding residues include serine 51 and threonine 72.

Belongs to the TRAFAC class TrmE-Era-EngA-EngB-Septin-like GTPase superfamily. EngB GTPase family. Mg(2+) serves as cofactor.

Necessary for normal cell division and for the maintenance of normal septation. The polypeptide is Probable GTP-binding protein EngB (Mesomycoplasma hyopneumoniae (strain 7448) (Mycoplasma hyopneumoniae)).